We begin with the raw amino-acid sequence, 238 residues long: tRNA (guanine-N(7)-)-methyltransferase (238 aa).

Residues Glu-70, Asp-95, Asp-122, and Asp-145 each coordinate S-adenosyl-L-methionine. Asp-145 is a catalytic residue. Residues Lys-149, Asp-181, and 216–219 (TKFE) contribute to the substrate site.

The protein belongs to the class I-like SAM-binding methyltransferase superfamily. TrmB family.

The catalysed reaction is guanosine(46) in tRNA + S-adenosyl-L-methionine = N(7)-methylguanosine(46) in tRNA + S-adenosyl-L-homocysteine. It functions in the pathway tRNA modification; N(7)-methylguanine-tRNA biosynthesis. Its function is as follows. Catalyzes the formation of N(7)-methylguanine at position 46 (m7G46) in tRNA. The protein is tRNA (guanine-N(7)-)-methyltransferase of Neisseria meningitidis serogroup C / serotype 2a (strain ATCC 700532 / DSM 15464 / FAM18).